Consider the following 56-residue polypeptide: Small ribosomal subunit protein uS14 (56 aa).

Cysteine 21, cysteine 24, cysteine 39, and cysteine 42 together coordinate Zn(2+).

This sequence belongs to the universal ribosomal protein uS14 family. As to quaternary structure, component of the 40S small ribosomal subunit. Zn(2+) is required as a cofactor.

It localises to the cytoplasm. The protein localises to the cytosol. The protein resides in the rough endoplasmic reticulum. In Spodoptera frugiperda (Fall armyworm), this protein is Small ribosomal subunit protein uS14 (RpS29).